The chain runs to 374 residues: N-acetyldiaminopimelate deacetylase (374 aa).

The active site involves Asp-68. The Proton acceptor role is filled by Glu-127.

It belongs to the peptidase M20A family. N-acetyldiaminopimelate deacetylase subfamily.

The enzyme catalyses N-acetyl-(2S,6S)-2,6-diaminopimelate + H2O = (2S,6S)-2,6-diaminopimelate + acetate. Its pathway is amino-acid biosynthesis; L-lysine biosynthesis via DAP pathway; LL-2,6-diaminopimelate from (S)-tetrahydrodipicolinate (acetylase route): step 3/3. In terms of biological role, catalyzes the conversion of N-acetyl-diaminopimelate to diaminopimelate and acetate. The sequence is that of N-acetyldiaminopimelate deacetylase from Shouchella clausii (strain KSM-K16) (Alkalihalobacillus clausii).